We begin with the raw amino-acid sequence, 344 residues long: Ferrochelatase (344 aa).

Positions 190 and 270 each coordinate Fe cation.

Belongs to the ferrochelatase family.

The protein resides in the cytoplasm. It catalyses the reaction heme b + 2 H(+) = protoporphyrin IX + Fe(2+). It participates in porphyrin-containing compound metabolism; protoheme biosynthesis; protoheme from protoporphyrin-IX: step 1/1. In terms of biological role, catalyzes the ferrous insertion into protoporphyrin IX. This chain is Ferrochelatase, found in Rickettsia felis (strain ATCC VR-1525 / URRWXCal2) (Rickettsia azadi).